A 393-amino-acid polypeptide reads, in one-letter code: Messenger RNA-binding inhibitor of apoptosis 1 (393 aa).

The interval 12-76 is KH 1-like; the sequence is ELYIPQKMKA…EKILRDVWRK (65 aa). Positions 79–157 are KH 2-like; that stretch reads VQIMIREAAL…MMIECLTEHF (79 aa). The tract at residues 259 to 322 is KH 3-like; the sequence is EKIKQWIPTT…NKEQCQEARN (64 aa). The interval 328-393 is disordered; the sequence is MQSHQDKPAS…LTPRKLSPSD (66 aa). Residues 345–359 show a composition bias toward low complexity; that stretch reads STPGSPFTSDSSSTT.

As to quaternary structure, may interact with wago-4. As to expression, expressed throughout the germline and in oocytes (at protein level).

Its subcellular location is the cytoplasm. The protein localises to the perinuclear region. Its function is as follows. RNA-binding protein which binds to its own mRNA and target mRNAs to negatively regulate gene expression to modulate apoptosis and differentiation in the germline. Negatively regulates the expression of the argonaute protein wago-4, and may thus play a role in RNA-mediated gene silencing (RNAi) in the germline. The chain is Messenger RNA-binding inhibitor of apoptosis 1 from Caenorhabditis elegans.